The chain runs to 688 residues: Elongation factor G (688 aa).

The tr-type G domain maps to 8 to 282 (ERTRNIGIMA…AVLDYLPAPT (275 aa)). GTP contacts are provided by residues 17 to 24 (AHIDAGKT), 81 to 85 (DTPGH), and 135 to 138 (NKMD).

The protein belongs to the TRAFAC class translation factor GTPase superfamily. Classic translation factor GTPase family. EF-G/EF-2 subfamily.

The protein localises to the cytoplasm. In terms of biological role, catalyzes the GTP-dependent ribosomal translocation step during translation elongation. During this step, the ribosome changes from the pre-translocational (PRE) to the post-translocational (POST) state as the newly formed A-site-bound peptidyl-tRNA and P-site-bound deacylated tRNA move to the P and E sites, respectively. Catalyzes the coordinated movement of the two tRNA molecules, the mRNA and conformational changes in the ribosome. The sequence is that of Elongation factor G from Clostridioides difficile (strain 630) (Peptoclostridium difficile).